Reading from the N-terminus, the 199-residue chain is Probable thymidylate kinase (199 aa).

13–20 (GIDGAGKT) provides a ligand contact to ATP.

It belongs to the thymidylate kinase family.

It catalyses the reaction dTMP + ATP = dTDP + ADP. This Staphylothermus marinus (strain ATCC 43588 / DSM 3639 / JCM 9404 / F1) protein is Probable thymidylate kinase.